A 493-amino-acid chain; its full sequence is Solute carrier family 2, facilitated glucose transporter member 3 (493 aa).

Topologically, residues 1–10 (MGTAKVTPSL) are cytoplasmic. Residues 11-32 (VFAVTVATIGSFQFGYNTGVIN) traverse the membrane as a helical segment. Topologically, residues 33–64 (APETIIKDFLNYTLEERLEDLPREGLLTTLWS) are extracellular. N43 carries N-linked (GlcNAc...) asparagine glycosylation. Residues 65 to 85 (LCVAIFSVGGMIGSFSVGLFV) traverse the membrane as a helical segment. At 86-90 (NRFGR) the chain is on the cytoplasmic side. The chain crosses the membrane as a helical span at residues 91-111 (RNSMLLVNLIAILGGCLMGFA). Over 112 to 118 (KIAESVE) the chain is Extracellular. A helical transmembrane segment spans residues 119–142 (MLILGRLIIGIFCGLCTGFVPMYI). Over 143–153 (GEVSPTALRGA) the chain is Cytoplasmic. The helical transmembrane segment at 154-174 (FGTLNQLGIVVGILVAQVFGL) threads the bilayer. Position 159 (Q159) interacts with D-glucose. The Extracellular portion of the chain corresponds to 175–183 (DFILGSEEL). A helical transmembrane segment spans residues 184–204 (WPGLLGLTIIPAILQSAALPF). Over 205 to 269 (CPESPRFLLI…LFKSPSYFQP (65 aa)) the chain is Cytoplasmic. Position 232 is a phosphothreonine (T232). A helical membrane pass occupies residues 270-290 (LLISVVLQLSQQFSGINAVFY). Positions 277-279 (QLS) are important for selectivity against fructose. Residues 280 to 281 (QQ) and N286 contribute to the D-glucose site. The Extracellular portion of the chain corresponds to 291 to 304 (YSTGIFQDAGVQEP). The helical transmembrane segment at 305–325 (IYATIGAGVVNTIFTVVSLFL) threads the bilayer. D-glucose is bound at residue N315. Residues 326–331 (VERAGR) lie on the Cytoplasmic side of the membrane. Residues 332–352 (RTLHMIGLGGMAVCSVFMTIS) form a helical membrane-spanning segment. Residues 353–363 (LLLKDEYEAMS) are Extracellular-facing. A helical membrane pass occupies residues 364–389 (FVCIVAILVYVAFFEIGPGPIPWFIV). Residues E378 and W386 each coordinate D-glucose. At 390-399 (AELFSQGPRP) the chain is on the cytoplasmic side. A helical membrane pass occupies residues 400-420 (AAMAVAGCSNWTSNFLVGMFF). The Extracellular portion of the chain corresponds to 421–429 (PSAAAYLGA). Residues 430–450 (YVFIIFAAFLVFFLIFTSFKV) form a helical membrane-spanning segment. At 451 to 493 (PETKGRTFEDITRAFEGQAHSGKGSAGVELNSMQPVKETPGNA) the chain is on the cytoplasmic side. Residues S471, S475, and S482 each carry the phosphoserine modification. T489 carries the post-translational modification Phosphothreonine.

It belongs to the major facilitator superfamily. Sugar transporter (TC 2.A.1.1) family. Glucose transporter subfamily. As to quaternary structure, interacts with SMIM43; the interaction may promote SLC2A3-mediated glucose transport to meet the energy needs of mesendoderm differentiation. In terms of tissue distribution, brain and osteoblastic cells (at protein level). Highly expressed in brain.

The protein resides in the cell membrane. The protein localises to the perikaryon. It is found in the cell projection. The enzyme catalyses D-glucose(out) = D-glucose(in). It carries out the reaction D-galactose(in) = D-galactose(out). With respect to regulation, deoxyglucose transport is inhibited by D-glucose, D-galactose and maltose. Galactose transport is inhibited by D-glucose and maltose. Functionally, facilitative glucose transporter. Can also mediate the uptake of various other monosaccharides across the cell membrane. Mediates the uptake of glucose, 2-deoxyglucose, galactose, mannose, xylose and fucose, and probably also dehydroascorbate. Does not mediate fructose transport. Required for mesendoderm differentiation. This chain is Solute carrier family 2, facilitated glucose transporter member 3, found in Rattus norvegicus (Rat).